A 1563-amino-acid polypeptide reads, in one-letter code: NACHT domain- and WD repeat-containing protein 1 (1563 aa).

The WD 1 repeat unit spans residues 274–314; that stretch reads TNHQVLEQLRELELARQELGWLYQEIRHHLWQSTESTKVFC. In terms of domain architecture, NACHT spans 336 to 666; sequence TPLVLFGPPG…HRQLSQVIQV (331 aa). Position 342–349 (342–349) interacts with ATP; the sequence is GPPGIGKT. WD repeat units lie at residues 866-905, 908-947, 954-994, 998-1037, 1044-1082, 1126-1165, 1168-1207, 1212-1251, 1253-1292, 1346-1385, 1386-1425, and 1431-1470; these read GCHK…VVHV, GHTA…EKVT, QNPT…LVFC, DVSD…LQEK, KEET…LLEK, EHED…TLLN, EGVG…KLQS, LDRT…EQDC, DTSN…DVLC, QLPE…FPLE, AHGS…GMFE, and SCCR…LLAV. Residues 1534-1563 are disordered; the sequence is AAEASQDAEPVAVEGKESKSNKRSQVCLIL.

In terms of assembly, may interact with HSP90AA1, HSP90AB1 and BAG2.

The protein localises to the cytoplasm. Its subcellular location is the cytosol. Its function is as follows. May play a role in the control of androgen receptor (AR) protein steady-state levels. The polypeptide is NACHT domain- and WD repeat-containing protein 1 (Nwd1) (Mus musculus (Mouse)).